A 473-amino-acid polypeptide reads, in one-letter code: Glutamate--tRNA ligase 2 (473 aa).

The 'HIGH' region motif lies at 11–21 (PSPTGYLHIGG). Residues 113–133 (KARAEGRPPRYDGRWRDRDPS) show a composition bias toward basic and acidic residues. Residues 113-136 (KARAEGRPPRYDGRWRDRDPSEAP) form a disordered region. The 'KMSKS' region signature appears at 240 to 244 (KLSKR). Lysine 243 lines the ATP pocket.

The protein belongs to the class-I aminoacyl-tRNA synthetase family. Glutamate--tRNA ligase type 1 subfamily. In terms of assembly, monomer.

Its subcellular location is the cytoplasm. The catalysed reaction is tRNA(Glu) + L-glutamate + ATP = L-glutamyl-tRNA(Glu) + AMP + diphosphate. Catalyzes the attachment of glutamate to tRNA(Glu) in a two-step reaction: glutamate is first activated by ATP to form Glu-AMP and then transferred to the acceptor end of tRNA(Glu). The sequence is that of Glutamate--tRNA ligase 2 from Brucella suis biovar 1 (strain 1330).